We begin with the raw amino-acid sequence, 1392 residues long: DNA-directed RNA polymerase subunit beta'' (1392 aa).

Zn(2+)-binding residues include cysteine 224, cysteine 295, cysteine 302, and cysteine 305.

Belongs to the RNA polymerase beta' chain family. RpoC2 subfamily. In terms of assembly, in plastids the minimal PEP RNA polymerase catalytic core is composed of four subunits: alpha, beta, beta', and beta''. When a (nuclear-encoded) sigma factor is associated with the core the holoenzyme is formed, which can initiate transcription. It depends on Zn(2+) as a cofactor.

It is found in the plastid. The protein resides in the chloroplast. It catalyses the reaction RNA(n) + a ribonucleoside 5'-triphosphate = RNA(n+1) + diphosphate. In terms of biological role, DNA-dependent RNA polymerase catalyzes the transcription of DNA into RNA using the four ribonucleoside triphosphates as substrates. This Solanum lycopersicum (Tomato) protein is DNA-directed RNA polymerase subunit beta''.